The chain runs to 457 residues: tRNA(Ile)-lysidine synthase (457 aa).

27–32 provides a ligand contact to ATP; the sequence is SGGLDS.

This sequence belongs to the tRNA(Ile)-lysidine synthase family.

Its subcellular location is the cytoplasm. The enzyme catalyses cytidine(34) in tRNA(Ile2) + L-lysine + ATP = lysidine(34) in tRNA(Ile2) + AMP + diphosphate + H(+). Its function is as follows. Ligates lysine onto the cytidine present at position 34 of the AUA codon-specific tRNA(Ile) that contains the anticodon CAU, in an ATP-dependent manner. Cytidine is converted to lysidine, thus changing the amino acid specificity of the tRNA from methionine to isoleucine. The sequence is that of tRNA(Ile)-lysidine synthase from Hamiltonella defensa subsp. Acyrthosiphon pisum (strain 5AT).